We begin with the raw amino-acid sequence, 313 residues long: Olfactory receptor 4M1 (313 aa).

The Extracellular portion of the chain corresponds to 1 to 25; that stretch reads MEPANDTTVTEFILTGLSQTREVQL. Residue Asn-5 is glycosylated (N-linked (GlcNAc...) asparagine). The chain crosses the membrane as a helical span at residues 26–46; sequence VLFVIFLSFYLFILPVNILII. The Cytoplasmic segment spans residues 47–57; sequence CTIRLDSHLSS. Residues 58 to 78 traverse the membrane as a helical segment; it reads PMYFLLANLAFLDIWYSSITA. The Extracellular portion of the chain corresponds to 79–97; sequence PKMLVDFFVERKIISFGGC. Cysteines 97 and 179 form a disulfide. The chain crosses the membrane as a helical span at residues 98–118; the sequence is IAQLFFLHFVGASEMFLLTVM. Residues 119–142 are Cytoplasmic-facing; the sequence is AFDRYAAICRPLHYATIMNRRLCC. The helical transmembrane segment at 143–163 threads the bilayer; sequence ILVALSWTGGFVHSIIQVALI. Topologically, residues 164-204 are extracellular; that stretch reads VRLPFCGPNELDNYFCDITQVVRIACANTFLEEMVMIFSSG. The chain crosses the membrane as a helical span at residues 205 to 225; that stretch reads LISVVCFIALLMSYAFLLTML. At 226–238 the chain is on the cytoplasmic side; sequence KKHSSSGESTSRA. Residues 239 to 259 form a helical membrane-spanning segment; the sequence is ISTCYSHITIVVLMFGPSIYI. The Extracellular portion of the chain corresponds to 260-270; sequence YARPFDSFSLD. A helical transmembrane segment spans residues 271–291; sequence KVVSVFHTVIFPLLNPIIYTL. The Cytoplasmic portion of the chain corresponds to 292 to 313; that stretch reads RNKEVKAAMRKLVNRYIFCKEK.

The protein belongs to the G-protein coupled receptor 1 family. As to expression, highly expressed in liver but not in adipose tissue. Also expressed at high level in testis.

It localises to the cell membrane. Functionally, olfactory receptor that acts as a receptor of Asprosin hormone at the surface of hepatocytes to promote hepatocyte glucose release. Also binds Asprosin in the arcuate nucleus of the hypothalamus, thereby stimulating appetite by promoting orexigenic AgRP neuronal activity. In testis, Asprosin-binding promotes sperm progressive motility and enhances male fertility. The activity of this receptor is mediated by G proteins which activate adenylyl cyclase, resulting in an elevation of intracellular cAMP. The polypeptide is Olfactory receptor 4M1 (Mus musculus (Mouse)).